Consider the following 628-residue polypeptide: DNA mismatch repair protein MutL (628 aa).

Residues 332–416 form a disordered region; that stretch reads PTSAMPAPGN…ASTAPPLSEE (85 aa). A compositionally biased stretch (polar residues) spans 375–396; sequence EGSSRSDVPYPSASQVTETTDS.

Belongs to the DNA mismatch repair MutL/HexB family.

In terms of biological role, this protein is involved in the repair of mismatches in DNA. It is required for dam-dependent methyl-directed DNA mismatch repair. May act as a 'molecular matchmaker', a protein that promotes the formation of a stable complex between two or more DNA-binding proteins in an ATP-dependent manner without itself being part of a final effector complex. The chain is DNA mismatch repair protein MutL from Syntrophotalea carbinolica (strain DSM 2380 / NBRC 103641 / GraBd1) (Pelobacter carbinolicus).